The sequence spans 212 residues: ATP-dependent Clp protease proteolytic subunit (212 aa).

Ser106 acts as the Nucleophile in catalysis. His131 is a catalytic residue.

It belongs to the peptidase S14 family. Fourteen ClpP subunits assemble into 2 heptameric rings which stack back to back to give a disk-like structure with a central cavity, resembling the structure of eukaryotic proteasomes.

It localises to the cytoplasm. It catalyses the reaction Hydrolysis of proteins to small peptides in the presence of ATP and magnesium. alpha-casein is the usual test substrate. In the absence of ATP, only oligopeptides shorter than five residues are hydrolyzed (such as succinyl-Leu-Tyr-|-NHMec, and Leu-Tyr-Leu-|-Tyr-Trp, in which cleavage of the -Tyr-|-Leu- and -Tyr-|-Trp bonds also occurs).. Its function is as follows. Cleaves peptides in various proteins in a process that requires ATP hydrolysis. Has a chymotrypsin-like activity. Plays a major role in the degradation of misfolded proteins. The sequence is that of ATP-dependent Clp protease proteolytic subunit from Rhodopseudomonas palustris (strain ATCC BAA-98 / CGA009).